The primary structure comprises 539 residues: CTP synthase (539 aa).

The tract at residues 1-268 (MADTKYIFVT…DETVLRKVGL (268 aa)) is amidoligase domain. Serine 15 provides a ligand contact to CTP. Residue serine 15 participates in UTP binding. ATP is bound at residue 16-21 (SLGKGI). An L-glutamine-binding site is contributed by tyrosine 56. Position 73 (aspartate 73) interacts with ATP. Aspartate 73 and glutamate 143 together coordinate Mg(2+). CTP-binding positions include 150–152 (DIE), 189–194 (KTKPTQ), and lysine 225. Residues 189–194 (KTKPTQ) and lysine 225 each bind UTP. One can recognise a Glutamine amidotransferase type-1 domain in the interval 294-536 (TIALVGKYVE…IREAIKTRKK (243 aa)). An L-glutamine-binding site is contributed by glycine 356. Cysteine 383 functions as the Nucleophile; for glutamine hydrolysis in the catalytic mechanism. L-glutamine contacts are provided by residues 384 to 387 (LGMQ), glutamate 407, and arginine 464. Catalysis depends on residues histidine 509 and glutamate 511.

Belongs to the CTP synthase family. In terms of assembly, homotetramer.

The catalysed reaction is UTP + L-glutamine + ATP + H2O = CTP + L-glutamate + ADP + phosphate + 2 H(+). The enzyme catalyses L-glutamine + H2O = L-glutamate + NH4(+). It carries out the reaction UTP + NH4(+) + ATP = CTP + ADP + phosphate + 2 H(+). It participates in pyrimidine metabolism; CTP biosynthesis via de novo pathway; CTP from UDP: step 2/2. Its activity is regulated as follows. Allosterically activated by GTP, when glutamine is the substrate; GTP has no effect on the reaction when ammonia is the substrate. The allosteric effector GTP functions by stabilizing the protein conformation that binds the tetrahedral intermediate(s) formed during glutamine hydrolysis. Inhibited by the product CTP, via allosteric rather than competitive inhibition. In terms of biological role, catalyzes the ATP-dependent amination of UTP to CTP with either L-glutamine or ammonia as the source of nitrogen. Regulates intracellular CTP levels through interactions with the four ribonucleotide triphosphates. The sequence is that of CTP synthase from Porphyromonas gingivalis (strain ATCC 33277 / DSM 20709 / CIP 103683 / JCM 12257 / NCTC 11834 / 2561).